A 303-amino-acid polypeptide reads, in one-letter code: UDP-3-O-acyl-N-acetylglucosamine deacetylase (303 aa).

Positions 78, 237, and 241 each coordinate Zn(2+). Residue H264 is the Proton donor of the active site.

It belongs to the LpxC family. The cofactor is Zn(2+).

It carries out the reaction a UDP-3-O-[(3R)-3-hydroxyacyl]-N-acetyl-alpha-D-glucosamine + H2O = a UDP-3-O-[(3R)-3-hydroxyacyl]-alpha-D-glucosamine + acetate. Its pathway is glycolipid biosynthesis; lipid IV(A) biosynthesis; lipid IV(A) from (3R)-3-hydroxytetradecanoyl-[acyl-carrier-protein] and UDP-N-acetyl-alpha-D-glucosamine: step 2/6. In terms of biological role, catalyzes the hydrolysis of UDP-3-O-myristoyl-N-acetylglucosamine to form UDP-3-O-myristoylglucosamine and acetate, the committed step in lipid A biosynthesis. The polypeptide is UDP-3-O-acyl-N-acetylglucosamine deacetylase (Coxiella burnetii (strain CbuK_Q154) (Coxiella burnetii (strain Q154))).